Consider the following 568-residue polypeptide: Methionine--tRNA ligase (568 aa).

The 'HIGH' region motif lies at 10–20 (PYVQSVPHLGN). The Zn(2+) site is built by Cys143, Cys146, Cys156, and Cys159. The 'KMSKS' region signature appears at 333 to 337 (KFSKS). Lys336 contacts ATP.

The protein belongs to the class-I aminoacyl-tRNA synthetase family. MetG type 1 subfamily. Zn(2+) serves as cofactor.

It localises to the cytoplasm. The catalysed reaction is tRNA(Met) + L-methionine + ATP = L-methionyl-tRNA(Met) + AMP + diphosphate. In terms of biological role, is required not only for elongation of protein synthesis but also for the initiation of all mRNA translation through initiator tRNA(fMet) aminoacylation. The sequence is that of Methionine--tRNA ligase from Metallosphaera sedula (strain ATCC 51363 / DSM 5348 / JCM 9185 / NBRC 15509 / TH2).